The primary structure comprises 428 residues: Lipoamide acyltransferase component of branched-chain alpha-keto acid dehydrogenase complex (428 aa).

In terms of domain architecture, Lipoyl-binding spans 3-78 (THVIKMPDIG…AVGGELIRLE (76 aa)). An N6-lipoyllysine modification is found at K44. Positions 88-145 (SPAAATPAAPVAATPEKPKEAPVAAPKAAAEAPRALRDSEAPRQRRQPGERPLASPAV) are disordered. A compositionally biased stretch (low complexity) spans 89–120 (PAAATPAAPVAATPEKPKEAPVAAPKAAAEAP). Residues 121-136 (RALRDSEAPRQRRQPG) show a composition bias toward basic and acidic residues. One can recognise a Peripheral subunit-binding (PSBD) domain in the interval 140 to 177 (LASPAVRQRARDLGIELQFVQGSGPAGRVLHEDLDAYL). Active-site residues include H400 and D404.

Belongs to the 2-oxoacid dehydrogenase family. In terms of assembly, forms a 24-polypeptide structural core with octahedral symmetry. The cofactor is (R)-lipoate.

The enzyme catalyses N(6)-[(R)-dihydrolipoyl]-L-lysyl-[protein] + 2-methylpropanoyl-CoA = N(6)-[(R)-S(8)-2-methylpropanoyldihydrolipoyl]-L-lysyl-[protein] + CoA. The branched-chain alpha-keto dehydrogenase complex catalyzes the overall conversion of alpha-keto acids to acyl-CoA and CO(2). It contains multiple copies of three enzymatic components: branched-chain alpha-keto acid decarboxylase (E1), lipoamide acyltransferase (E2) and lipoamide dehydrogenase (E3). In Pseudomonas aeruginosa (strain ATCC 15692 / DSM 22644 / CIP 104116 / JCM 14847 / LMG 12228 / 1C / PRS 101 / PAO1), this protein is Lipoamide acyltransferase component of branched-chain alpha-keto acid dehydrogenase complex (bkdB).